The sequence spans 394 residues: Ribulose bisphosphate carboxylase large chain (394 aa).

An N6,N6,N6-trimethyllysine modification is found at lysine 5. Positions 114 and 164 each coordinate substrate. The Proton acceptor role is filled by lysine 166. Residue lysine 168 participates in substrate binding. Residues lysine 192, aspartate 194, and glutamate 195 each coordinate Mg(2+). Lysine 192 carries the N6-carboxylysine modification. Histidine 285 (proton acceptor) is an active-site residue. Positions 286, 318, and 370 each coordinate substrate.

This sequence belongs to the RuBisCO large chain family. Type I subfamily. As to quaternary structure, heterohexadecamer of 8 large chains and 8 small chains. Requires Mg(2+) as cofactor.

Its subcellular location is the plastid. It is found in the chloroplast. It catalyses the reaction 2 (2R)-3-phosphoglycerate + 2 H(+) = D-ribulose 1,5-bisphosphate + CO2 + H2O. It carries out the reaction D-ribulose 1,5-bisphosphate + O2 = 2-phosphoglycolate + (2R)-3-phosphoglycerate + 2 H(+). Its function is as follows. RuBisCO catalyzes two reactions: the carboxylation of D-ribulose 1,5-bisphosphate, the primary event in carbon dioxide fixation, as well as the oxidative fragmentation of the pentose substrate in the photorespiration process. Both reactions occur simultaneously and in competition at the same active site. This chain is Ribulose bisphosphate carboxylase large chain (rbcL), found in Barclaya longifolia (Orchid lily).